A 275-amino-acid chain; its full sequence is Ribosomal RNA small subunit methyltransferase A (275 aa).

S-adenosyl-L-methionine-binding residues include Asn28, Leu30, Gly55, Glu77, Asp103, and Asn123.

This sequence belongs to the class I-like SAM-binding methyltransferase superfamily. rRNA adenine N(6)-methyltransferase family. RsmA subfamily.

It is found in the cytoplasm. The enzyme catalyses adenosine(1518)/adenosine(1519) in 16S rRNA + 4 S-adenosyl-L-methionine = N(6)-dimethyladenosine(1518)/N(6)-dimethyladenosine(1519) in 16S rRNA + 4 S-adenosyl-L-homocysteine + 4 H(+). Functionally, specifically dimethylates two adjacent adenosines (A1518 and A1519) in the loop of a conserved hairpin near the 3'-end of 16S rRNA in the 30S particle. May play a critical role in biogenesis of 30S subunits. The polypeptide is Ribosomal RNA small subunit methyltransferase A (Rhizobium etli (strain CIAT 652)).